A 25-amino-acid chain; its full sequence is Oxyopinin-3c (25 aa).

Expressed by the venom gland.

It is found in the secreted. In terms of biological role, may have cytolytic and antimicrobial activity. This chain is Oxyopinin-3c, found in Oxyopes takobius (Lynx spider).